The chain runs to 273 residues: HMP-PP phosphatase (273 aa).

The active-site Nucleophile is the Asp8. The Mg(2+) site is built by Asp8, Asp10, and Asp212.

The protein belongs to the HAD-like hydrolase superfamily. Cof family. Mg(2+) serves as cofactor.

It carries out the reaction 4-amino-2-methyl-5-(diphosphooxymethyl)pyrimidine + H2O = 4-amino-2-methyl-5-(phosphooxymethyl)pyrimidine + phosphate + H(+). Its function is as follows. Catalyzes the hydrolysis of 4-amino-2-methyl-5-hydroxymethylpyrimidine pyrophosphate (HMP-PP) to 4-amino-2-methyl-5-hydroxymethylpyrimidine phosphate (HMP-P). This chain is HMP-PP phosphatase, found in Yersinia pestis bv. Antiqua (strain Antiqua).